A 224-amino-acid chain; its full sequence is uncharacterized protein (224 aa).

The presence of the two linear plasmids, termed pGKL1 and pGKL2, in strains of Kluyveromyces lactis confers the killer phenotype to the host cell, by promoting the secretion of a toxin able to inhibit the growth of sensitive strains. This is an uncharacterized protein from Kluyveromyces lactis (strain ATCC 8585 / CBS 2359 / DSM 70799 / NBRC 1267 / NRRL Y-1140 / WM37) (Yeast).